Here is a 328-residue protein sequence, read N- to C-terminus: Malate dehydrogenase 2 (328 aa).

Gly-12 to Ala-18 provides a ligand contact to NAD(+). Substrate contacts are provided by Arg-93 and Arg-99. Residues Asn-106, Gln-113, and Val-130–Asn-132 each bind NAD(+). Asn-132 and Arg-163 together coordinate substrate. The active-site Proton acceptor is the His-188.

Belongs to the LDH/MDH superfamily. MDH type 2 family.

The catalysed reaction is (S)-malate + NAD(+) = oxaloacetate + NADH + H(+). Catalyzes the reversible oxidation of malate to oxaloacetate. The sequence is that of Malate dehydrogenase 2 from Burkholderia vietnamiensis (strain G4 / LMG 22486) (Burkholderia cepacia (strain R1808)).